We begin with the raw amino-acid sequence, 144 residues long: Large ribosomal subunit protein uL22 (144 aa).

Positions 123–144 are disordered; the sequence is ELVKKRTMGHKKEKAKQKQKQQ. Over residues 125-144 the composition is skewed to basic residues; it reads VKKRTMGHKKEKAKQKQKQQ.

Belongs to the universal ribosomal protein uL22 family. As to quaternary structure, part of the 50S ribosomal subunit.

Functionally, this protein binds specifically to 23S rRNA; its binding is stimulated by other ribosomal proteins, e.g. L4, L17, and L20. It is important during the early stages of 50S assembly. It makes multiple contacts with different domains of the 23S rRNA in the assembled 50S subunit and ribosome. The globular domain of the protein is located near the polypeptide exit tunnel on the outside of the subunit, while an extended beta-hairpin is found that lines the wall of the exit tunnel in the center of the 70S ribosome. This is Large ribosomal subunit protein uL22 from Mycoplasma genitalium (strain ATCC 33530 / DSM 19775 / NCTC 10195 / G37) (Mycoplasmoides genitalium).